The following is a 365-amino-acid chain: Caffeic acid 3-O-methyltransferase 1 (365 aa).

130-136 (MNQDKVL) serves as a coordination point for substrate. The interval 162–180 (AFEYHGTDPRFNKVFNKGM) is substrate binding. Positions 208, 231, 251, 252, and 265 each coordinate S-adenosyl-L-methionine. H269 serves as the catalytic Proton acceptor.

The protein belongs to the class I-like SAM-binding methyltransferase superfamily. Cation-independent O-methyltransferase family. COMT subfamily. In terms of assembly, homodimer.

The enzyme catalyses (E)-caffeate + S-adenosyl-L-methionine = (E)-ferulate + S-adenosyl-L-homocysteine + H(+). Its pathway is aromatic compound metabolism; phenylpropanoid biosynthesis. In terms of biological role, catalyzes the conversion of caffeic acid to ferulic acid and of 5-hydroxyferulic acid to sinapic acid. The resulting products may subsequently be converted to the corresponding alcohols that are incorporated into lignins. The polypeptide is Caffeic acid 3-O-methyltransferase 1 (HOMT1) (Populus kitakamiensis (Aspen)).